The primary structure comprises 235 residues: Protein GrpE (235 aa).

Residues methionine 1–valine 18 show a composition bias toward polar residues. Disordered regions lie at residues methionine 1–histidine 50 and glutamate 198–serine 235. Positions threonine 19–proline 35 are enriched in basic and acidic residues.

Belongs to the GrpE family. As to quaternary structure, homodimer.

It is found in the cytoplasm. Participates actively in the response to hyperosmotic and heat shock by preventing the aggregation of stress-denatured proteins, in association with DnaK and GrpE. It is the nucleotide exchange factor for DnaK and may function as a thermosensor. Unfolded proteins bind initially to DnaJ; upon interaction with the DnaJ-bound protein, DnaK hydrolyzes its bound ATP, resulting in the formation of a stable complex. GrpE releases ADP from DnaK; ATP binding to DnaK triggers the release of the substrate protein, thus completing the reaction cycle. Several rounds of ATP-dependent interactions between DnaJ, DnaK and GrpE are required for fully efficient folding. This is Protein GrpE from Mycobacterium bovis (strain BCG / Pasteur 1173P2).